Reading from the N-terminus, the 531-residue chain is Importin subunit alpha-3 (531 aa).

The IBB domain maps to 1–58 (MSLRPSAKTEVRRNRYKVAVDAEEGRRRREDNLVEIRKNKREENLQKKRFTSSMAFGS). 8 ARM repeats span residues 111 to 153 (INEV…TSEN), 154 to 198 (TNVI…CRDL), 199 to 236 (VLSY…RGKP), 237 to 281 (PPAF…DKIQ), 282 to 321 (AVIE…DDLQ), 322 to 364 (TQMV…NADQ), 365 to 405 (IQAV…GGTH), and 406 to 447 (DQIK…VVGE). A disordered region spans residues 500–524 (DNEEEGNDENHAPQSGFQFGSTNVP). Positions 511-524 (APQSGFQFGSTNVP) are enriched in polar residues.

This sequence belongs to the importin alpha family. As to quaternary structure, forms a complex with importin subunit beta-1. Interacts with PRL1. Interacts with A.tumefaciens VirD2 and VirE2.

It localises to the nucleus. Functionally, binds to conventional NLS motifs and mediates nuclear protein import across the nuclear envelope. Acts as a cellular receptor for the nuclear import of the virD2 protein of Agrobacterium, but is not essential for Agrobacterium-mediated root transformation. May be involved in the regulation of pathogen-induced salicylic acid accumulation. The chain is Importin subunit alpha-3 from Arabidopsis thaliana (Mouse-ear cress).